Consider the following 1404-residue polypeptide: DNA-directed RNA polymerase subunit beta' (1404 aa).

Residues cysteine 60, cysteine 62, cysteine 75, and cysteine 78 each contribute to the Zn(2+) site. Positions 449, 451, and 453 each coordinate Mg(2+). Residues cysteine 778, cysteine 852, cysteine 859, and cysteine 862 each contribute to the Zn(2+) site. The tract at residues 1381–1404 (DRPLEEEEEEEIPQSIADDSDGDE) is disordered. Over residues 1384-1404 (LEEEEEEEIPQSIADDSDGDE) the composition is skewed to acidic residues.

It belongs to the RNA polymerase beta' chain family. The RNAP catalytic core consists of 2 alpha, 1 beta, 1 beta' and 1 omega subunit. When a sigma factor is associated with the core the holoenzyme is formed, which can initiate transcription. Mg(2+) is required as a cofactor. It depends on Zn(2+) as a cofactor.

The enzyme catalyses RNA(n) + a ribonucleoside 5'-triphosphate = RNA(n+1) + diphosphate. DNA-dependent RNA polymerase catalyzes the transcription of DNA into RNA using the four ribonucleoside triphosphates as substrates. In Leptospira borgpetersenii serovar Hardjo-bovis (strain L550), this protein is DNA-directed RNA polymerase subunit beta'.